A 275-amino-acid polypeptide reads, in one-letter code: Uroporphyrinogen-III synthase (275 aa).

It belongs to the uroporphyrinogen-III synthase family.

The enzyme catalyses hydroxymethylbilane = uroporphyrinogen III + H2O. The protein operates within porphyrin-containing compound metabolism; protoporphyrin-IX biosynthesis; coproporphyrinogen-III from 5-aminolevulinate: step 3/4. Functionally, catalyzes cyclization of the linear tetrapyrrole, hydroxymethylbilane, to the macrocyclic uroporphyrinogen III, the fourth step in the heme biosynthetic pathway. The protein is Uroporphyrinogen-III synthase of Saccharomyces cerevisiae (strain ATCC 204508 / S288c) (Baker's yeast).